The chain runs to 118 residues: DNA-binding protein MmarC6_0793 (118 aa).

Positions methionine 1–glutamine 12 are enriched in basic and acidic residues. Positions methionine 1–glutamine 33 are disordered. Positions glutamine 24 to glutamine 33 are enriched in low complexity.

This sequence belongs to the PDCD5 family.

This chain is DNA-binding protein MmarC6_0793, found in Methanococcus maripaludis (strain C6 / ATCC BAA-1332).